Consider the following 192-residue polypeptide: Protein GrpE (192 aa).

It belongs to the GrpE family. In terms of assembly, homodimer.

It is found in the cytoplasm. Functionally, participates actively in the response to hyperosmotic and heat shock by preventing the aggregation of stress-denatured proteins, in association with DnaK and GrpE. It is the nucleotide exchange factor for DnaK and may function as a thermosensor. Unfolded proteins bind initially to DnaJ; upon interaction with the DnaJ-bound protein, DnaK hydrolyzes its bound ATP, resulting in the formation of a stable complex. GrpE releases ADP from DnaK; ATP binding to DnaK triggers the release of the substrate protein, thus completing the reaction cycle. Several rounds of ATP-dependent interactions between DnaJ, DnaK and GrpE are required for fully efficient folding. The polypeptide is Protein GrpE (Neisseria gonorrhoeae (strain ATCC 700825 / FA 1090)).